We begin with the raw amino-acid sequence, 95 residues long: Scytovirin (95 aa).

Residues 3–41 (GPTYCWNEANNPGGPNRCSNNKQCDGARTCSSSGFCQGT) are SD1. 5 cysteine pairs are disulfide-bonded: Cys-7-Cys-55, Cys-20-Cys-32, Cys-26-Cys-38, Cys-68-Cys-80, and Cys-74-Cys-86. The SD2 stretch occupies residues 51-89 (GPTYCWDEAKNPGGPNRCSNSKQCDGARTCSSSGFCQGT).

Has strong anti-HIV activity against T-tropic strains of HIV-1 and weaker activity against M-tropic strains of HIV-1. Inhibits HIV-1 fusion and infection of CD4 LTR beta-gal cells in vitro. Inhibits fusion of HIV infected CEM-SS cells with uninfected CEM-SS cells, and fusion of HIV-1 Env expressing HL2/3 cells with CD4 LTR beta-gal cells. Binds to HIV gp120, HIV gp160 and to a lesser extent HIV gp41. Binding to HIV gp120 is glycosylation dependent. Binds with high specificity to the tetrasaccharide Man-alpha-1,2-Man-alpha-1,6-Man-alpha-1,6-Man and also binds the higher-order oligosaccharides oligomannose 8 and oligomannose 9. Does not bind to monosaccharides, complex or hybrid N-linked oligosaccharides or chitin. The sequence is that of Scytovirin from Scytonema varium.